We begin with the raw amino-acid sequence, 282 residues long: HTH-type transcriptional activator RhaR (282 aa).

An HTH araC/xylS-type domain is found at 179–277 (DKLITALANS…GMTPSQWRHL (99 aa)). 2 DNA-binding regions (H-T-H motif) span residues 196–217 (DAFCQQEQCSERVLRQQFRAQT) and 244–267 (VSEISMQCGFEDSNYFSVVFTRET).

Binds DNA as a dimer.

Its subcellular location is the cytoplasm. Functionally, activates expression of the rhaSR operon in response to L-rhamnose. The polypeptide is HTH-type transcriptional activator RhaR (Salmonella typhi).